Reading from the N-terminus, the 382-residue chain is Alanine racemase 1 (382 aa).

The active-site Proton acceptor; specific for D-alanine is the Lys39. At Lys39 the chain carries N6-(pyridoxal phosphate)lysine. Arg138 lines the substrate pocket. The active-site Proton acceptor; specific for L-alanine is the Tyr265. Residue Met312 coordinates substrate.

It belongs to the alanine racemase family. It depends on pyridoxal 5'-phosphate as a cofactor.

The catalysed reaction is L-alanine = D-alanine. Its pathway is amino-acid biosynthesis; D-alanine biosynthesis; D-alanine from L-alanine: step 1/1. Functionally, catalyzes the interconversion of L-alanine and D-alanine. May also act on other amino acids. The polypeptide is Alanine racemase 1 (alr1) (Staphylococcus aureus (strain NCTC 8325 / PS 47)).